A 245-amino-acid chain; its full sequence is Ribosomal RNA small subunit methyltransferase G (245 aa).

Residues glycine 79, phenylalanine 84, 130–131 (AE), and arginine 150 each bind S-adenosyl-L-methionine.

Belongs to the methyltransferase superfamily. RNA methyltransferase RsmG family.

Its subcellular location is the cytoplasm. Functionally, specifically methylates the N7 position of a guanine in 16S rRNA. In Limosilactobacillus fermentum (strain NBRC 3956 / LMG 18251) (Lactobacillus fermentum), this protein is Ribosomal RNA small subunit methyltransferase G.